The sequence spans 123 residues: Small ribosomal subunit protein uS12 (123 aa).

A 3-methylthioaspartic acid modification is found at Asp89.

The protein belongs to the universal ribosomal protein uS12 family. As to quaternary structure, part of the 30S ribosomal subunit. Contacts proteins S8 and S17. May interact with IF1 in the 30S initiation complex.

With S4 and S5 plays an important role in translational accuracy. Functionally, interacts with and stabilizes bases of the 16S rRNA that are involved in tRNA selection in the A site and with the mRNA backbone. Located at the interface of the 30S and 50S subunits, it traverses the body of the 30S subunit contacting proteins on the other side and probably holding the rRNA structure together. The combined cluster of proteins S8, S12 and S17 appears to hold together the shoulder and platform of the 30S subunit. The polypeptide is Small ribosomal subunit protein uS12 (Pelagibacter ubique (strain HTCC1062)).